The sequence spans 114 residues: Phosphoribosyl-AMP cyclohydrolase (114 aa).

Position 76 (Asp76) interacts with Mg(2+). Position 77 (Cys77) interacts with Zn(2+). Positions 78 and 80 each coordinate Mg(2+). 2 residues coordinate Zn(2+): Cys93 and Cys100.

The protein belongs to the PRA-CH family. In terms of assembly, homodimer. Requires Mg(2+) as cofactor. It depends on Zn(2+) as a cofactor.

The protein resides in the cytoplasm. It catalyses the reaction 1-(5-phospho-beta-D-ribosyl)-5'-AMP + H2O = 1-(5-phospho-beta-D-ribosyl)-5-[(5-phospho-beta-D-ribosylamino)methylideneamino]imidazole-4-carboxamide. It participates in amino-acid biosynthesis; L-histidine biosynthesis; L-histidine from 5-phospho-alpha-D-ribose 1-diphosphate: step 3/9. In terms of biological role, catalyzes the hydrolysis of the adenine ring of phosphoribosyl-AMP. The polypeptide is Phosphoribosyl-AMP cyclohydrolase (Streptococcus gordonii (strain Challis / ATCC 35105 / BCRC 15272 / CH1 / DL1 / V288)).